Here is a 188-residue protein sequence, read N- to C-terminus: Peptidyl-tRNA hydrolase (188 aa).

Tyr14 provides a ligand contact to tRNA. The active-site Proton acceptor is His19. Residues Tyr64, Asn66, and Asn112 each coordinate tRNA.

This sequence belongs to the PTH family. In terms of assembly, monomer.

The protein localises to the cytoplasm. It catalyses the reaction an N-acyl-L-alpha-aminoacyl-tRNA + H2O = an N-acyl-L-amino acid + a tRNA + H(+). In terms of biological role, hydrolyzes ribosome-free peptidyl-tRNAs (with 1 or more amino acids incorporated), which drop off the ribosome during protein synthesis, or as a result of ribosome stalling. Catalyzes the release of premature peptidyl moieties from peptidyl-tRNA molecules trapped in stalled 50S ribosomal subunits, and thus maintains levels of free tRNAs and 50S ribosomes. The chain is Peptidyl-tRNA hydrolase from Clostridium tetani (strain Massachusetts / E88).